The following is a 138-amino-acid chain: MDKTFHLEVLTPYRKFYEGDVEEIIVTTTTGQIGILKDHIPLTTPIAQAGTLQIKKDGQWKEAFISGGFMEVRRDGVTILSSAAEWPEEIDIARAQAAKERAEEKLRQKKSKQEYIAAEAALKRALMRLKIASKYQEM.

Belongs to the ATPase epsilon chain family. F-type ATPases have 2 components, CF(1) - the catalytic core - and CF(0) - the membrane proton channel. CF(1) has five subunits: alpha(3), beta(3), gamma(1), delta(1), epsilon(1). CF(0) has three main subunits: a, b and c.

The protein localises to the cell membrane. In terms of biological role, produces ATP from ADP in the presence of a proton gradient across the membrane. This chain is ATP synthase epsilon chain, found in Caldanaerobacter subterraneus subsp. tengcongensis (strain DSM 15242 / JCM 11007 / NBRC 100824 / MB4) (Thermoanaerobacter tengcongensis).